We begin with the raw amino-acid sequence, 135 residues long: Protein NrdI (135 aa).

This sequence belongs to the NrdI family.

In terms of biological role, probably involved in ribonucleotide reductase function. The sequence is that of Protein NrdI from Rhizobium johnstonii (strain DSM 114642 / LMG 32736 / 3841) (Rhizobium leguminosarum bv. viciae).